We begin with the raw amino-acid sequence, 650 residues long: Exonuclease 3'-5' domain-containing protein 2 (650 aa).

Topologically, residues 1–6 (MSRQNL) are mitochondrial intermembrane. The helical transmembrane segment at 7–29 (VALTVTTLLGVAMGGFVLWKGIQ) threads the bilayer. Over 30–650 (RRWSKTSRVM…YGDDLPIKLS (621 aa)) the chain is Cytoplasmic. Residues 34-89 (KTSRVMQQQPQQPQQPQQPQPQPQPQPQPQPEHPQPQQQVPGGREWPPPEDDQLPF) are disordered. Positions 49–67 (PQQPQPQPQPQPQPQPEHP) are enriched in pro residues. A divalent metal cation contacts are provided by Asp137, Glu139, and Asp275. Residues 184–276 (ILADGAILKV…DQVTYAARDA (93 aa)) form the 3'-5' exonuclease domain. The tract at residues 340 to 373 (SQLKPRNRKAKTDRMVPGNNQGRDPRKHKRKPLG) is disordered.

The protein belongs to the EXD2 family. As to quaternary structure, homodimer. Interacts with RBBP8, MRE11 and BRCA1. Mg(2+) serves as cofactor. It depends on Mn(2+) as a cofactor.

It localises to the mitochondrion outer membrane. The protein localises to the mitochondrion matrix. The protein resides in the nucleus. It is found in the chromosome. It catalyses the reaction Exonucleolytic cleavage in the 3'- to 5'-direction to yield nucleoside 5'-phosphates.. Functionally, exonuclease that has both 3'-5' exoribonuclease and exodeoxyribonuclease activities, depending on the divalent metal cation used as cofactor. In presence of Mg(2+), only shows 3'-5' exoribonuclease activity, while it shows both exoribonuclease and exodeoxyribonuclease activities in presence of Mn(2+). Acts as an exoribonuclease in mitochondrion, possibly by regulating ATP production and mitochondrial translation. Also involved in the response to DNA damage. Acts as 3'-5' exodeoxyribonuclease for double-strand breaks resection and efficient homologous recombination. Plays a key role in controlling the initial steps of chromosomal break repair, it is recruited to chromatin in a damage-dependent manner and functionally interacts with the MRN complex to accelerate resection through its 3'-5' exonuclease activity, which efficiently processes double-stranded DNA substrates containing nicks. Also involved in response to replicative stress: recruited to stalled forks and is required to stabilize and restart stalled replication forks by restraining excessive fork regression, thereby suppressing their degradation. The chain is Exonuclease 3'-5' domain-containing protein 2 from Mus musculus (Mouse).